The chain runs to 121 residues: uncharacterized protein (121 aa).

Residues 1 to 121 (MGQVLSICSS…QQEREQIKWD (121 aa)) are disordered. Residue Gly-2 is the site of N-myristoyl glycine attachment. Cys-8 is lipidated: S-palmitoyl cysteine. 4 stretches are compositionally biased toward basic and acidic residues: residues 11–23 (KSKE…EKPT), 73–83 (AAEKRNIEKKK), 90–105 (RQLE…EHLQ), and 112–121 (QQEREQIKWD).

It to yeast YGL108C. In terms of processing, myristoylated. The N-myristoylated protein is further palmitoylated.

Its subcellular location is the cytoplasm. It localises to the cytosol. This is an uncharacterized protein from Schizosaccharomyces pombe (strain 972 / ATCC 24843) (Fission yeast).